The following is a 446-amino-acid chain: Plant intracellular Ras-group-related LRR protein 3 (446 aa).

Positions 65-100 form a coiled coil; sequence EACRAVVRLEETHDAYEALLQEAEGRLEAVYRSAME. Positions 101–121 are disordered; sequence GKDLEEPDGRDESAAAAAGDD. 10 LRR repeats span residues 138 to 160, 161 to 184, 185 to 207, 208 to 230, 232 to 254, 255 to 277, 279 to 300, 301 to 324, 325 to 347, and 349 to 371; these read GKPV…AFGR, IQGL…IGGL, DHLE…IGLL, LNLR…ISKC, SLIE…GYEL, VNLR…ICEM, SLYL…IGKL, SSLE…SFGD, LLNL…NFGR, and DKLE…IVNK. The GVYW motif lies at 372 to 384; the sequence is GVDAVKEYMLQRW.

This sequence belongs to the SHOC2 family. In terms of tissue distribution, widely expressed.

In terms of biological role, leucine-rich repeat protein that likely mediates protein interactions, possibly in the context of signal transduction. This Oryza sativa subsp. japonica (Rice) protein is Plant intracellular Ras-group-related LRR protein 3 (IRL3).